Reading from the N-terminus, the 711-residue chain is Polyribonucleotide nucleotidyltransferase (711 aa).

Residues Asp-486 and Asp-492 each contribute to the Mg(2+) site. The KH domain occupies 553–612 (PRIHTIKINPDKIKDVIGKGGSVIRALTEETGTTIEIEDDGTVKIAATDGEKAKHAIRRI). Residues 622-690 (GRVYTGKVTR…RQGRIRLSIK (69 aa)) enclose the S1 motif domain. The disordered stretch occupies residues 689-711 (IKEATEQSQPAAAPEAPAAEQGE). Residues 694-711 (EQSQPAAAPEAPAAEQGE) are compositionally biased toward low complexity.

The protein belongs to the polyribonucleotide nucleotidyltransferase family. Component of the RNA degradosome, which is a multiprotein complex involved in RNA processing and mRNA degradation. Requires Mg(2+) as cofactor.

It localises to the cytoplasm. The enzyme catalyses RNA(n+1) + phosphate = RNA(n) + a ribonucleoside 5'-diphosphate. Its function is as follows. Involved in mRNA degradation. Catalyzes the phosphorolysis of single-stranded polyribonucleotides processively in the 3'- to 5'-direction. The sequence is that of Polyribonucleotide nucleotidyltransferase from Escherichia coli (strain SE11).